The sequence spans 310 residues: Small ribosomal subunit biogenesis GTPase RsgA (310 aa).

The region spanning 77–238 (LSKQSHILAA…IIDTPGIKGF (162 aa)) is the CP-type G domain. Residues 126 to 129 (NKVD) and 180 to 188 (GHSGVGKST) contribute to the GTP site. Positions 262, 267, 269, and 275 each coordinate Zn(2+).

Belongs to the TRAFAC class YlqF/YawG GTPase family. RsgA subfamily. Monomer. Associates with 30S ribosomal subunit, binds 16S rRNA. Zn(2+) serves as cofactor.

The protein localises to the cytoplasm. In terms of biological role, one of several proteins that assist in the late maturation steps of the functional core of the 30S ribosomal subunit. Helps release RbfA from mature subunits. May play a role in the assembly of ribosomal proteins into the subunit. Circularly permuted GTPase that catalyzes slow GTP hydrolysis, GTPase activity is stimulated by the 30S ribosomal subunit. The sequence is that of Small ribosomal subunit biogenesis GTPase RsgA from Bacteroides fragilis (strain ATCC 25285 / DSM 2151 / CCUG 4856 / JCM 11019 / LMG 10263 / NCTC 9343 / Onslow / VPI 2553 / EN-2).